The chain runs to 210 residues: Imidazoleglycerol-phosphate dehydratase (210 aa).

Belongs to the imidazoleglycerol-phosphate dehydratase family.

The protein localises to the cytoplasm. It carries out the reaction D-erythro-1-(imidazol-4-yl)glycerol 3-phosphate = 3-(imidazol-4-yl)-2-oxopropyl phosphate + H2O. It participates in amino-acid biosynthesis; L-histidine biosynthesis; L-histidine from 5-phospho-alpha-D-ribose 1-diphosphate: step 6/9. The protein is Imidazoleglycerol-phosphate dehydratase of Mycobacterium leprae (strain Br4923).